The chain runs to 317 residues: Beta-ketoacyl-[acyl-carrier-protein] synthase III (317 aa).

Catalysis depends on residues cysteine 112 and histidine 244. The tract at residues 245 to 249 (QANIR) is ACP-binding. Residue asparagine 274 is part of the active site.

The protein belongs to the thiolase-like superfamily. FabH family. Homodimer.

The protein localises to the cytoplasm. The enzyme catalyses malonyl-[ACP] + acetyl-CoA + H(+) = 3-oxobutanoyl-[ACP] + CO2 + CoA. It functions in the pathway lipid metabolism; fatty acid biosynthesis. Catalyzes the condensation reaction of fatty acid synthesis by the addition to an acyl acceptor of two carbons from malonyl-ACP. Catalyzes the first condensation reaction which initiates fatty acid synthesis and may therefore play a role in governing the total rate of fatty acid production. Possesses both acetoacetyl-ACP synthase and acetyl transacylase activities. Its substrate specificity determines the biosynthesis of branched-chain and/or straight-chain of fatty acids. This is Beta-ketoacyl-[acyl-carrier-protein] synthase III from Rickettsia massiliae (strain Mtu5).